The chain runs to 336 residues: Probable G-protein coupled receptor 82 (336 aa).

The Extracellular segment spans residues Met1 to Ser11. 2 N-linked (GlcNAc...) asparagine glycosylation sites follow: Asn3 and Asn4. The chain crosses the membrane as a helical span at residues Met12–Gly32. Topologically, residues Asn33–Ser55 are cytoplasmic. A helical membrane pass occupies residues His56–Leu76. The Extracellular portion of the chain corresponds to Lys77–Asn92. Residues Phe93–Ile115 form a helical membrane-spanning segment. At Ser116–Cys156 the chain is on the cytoplasmic side. The helical transmembrane segment at Ile157 to Ile177 threads the bilayer. Over Glu178 to Met197 the chain is Extracellular. A helical transmembrane segment spans residues Ile198–Leu218. The Cytoplasmic portion of the chain corresponds to Thr219 to Leu251. A helical transmembrane segment spans residues Leu252 to Phe272. The Extracellular portion of the chain corresponds to Tyr273–Gly336.

It belongs to the G-protein coupled receptor 1 family.

Its subcellular location is the cell membrane. Orphan receptor. The protein is Probable G-protein coupled receptor 82 (GPR82) of Homo sapiens (Human).